A 316-amino-acid polypeptide reads, in one-letter code: Ribosomal RNA small subunit methyltransferase H (316 aa).

S-adenosyl-L-methionine contacts are provided by residues 36-38 (GGH), Asp56, Phe83, Asp104, and Gln111.

It belongs to the methyltransferase superfamily. RsmH family.

It is found in the cytoplasm. It catalyses the reaction cytidine(1402) in 16S rRNA + S-adenosyl-L-methionine = N(4)-methylcytidine(1402) in 16S rRNA + S-adenosyl-L-homocysteine + H(+). Its function is as follows. Specifically methylates the N4 position of cytidine in position 1402 (C1402) of 16S rRNA. This is Ribosomal RNA small subunit methyltransferase H from Protochlamydia amoebophila (strain UWE25).